A 322-amino-acid chain; its full sequence is CXXC-type zinc finger protein 5 (322 aa).

A compositionally biased stretch (gly residues) spans 1-10; sequence MSSLGGGSQD. The tract at residues 1–100 is disordered; that stretch reads MSSLGGGSQD…SGGGSMMGGE (100 aa). Composition is skewed to low complexity over residues 11–20 and 28–52; these read AGGSSSSSTN and SGPK…VADD. A Phosphothreonine modification is found at T53. Positions 87–97 are enriched in gly residues; the sequence is SSGGSGGGSMM. A CXXC-type zinc finger spans residues 256-297; the sequence is GKKKRKRCGMCAPCRRRINCEQCSSCRNRKTGHQICKFRKCE. A Nuclear localization signal motif is present at residues 257–262; the sequence is KKKRKR. Residues C263, C266, C269, C275, C278, C281, C291, and C296 each contribute to the Zn(2+) site.

Interacts with DVL1. Interacts with RBPJ.

The protein localises to the nucleus. It is found in the cytoplasm. Functionally, may indirectly participate in activation of the NF-kappa-B and MAPK pathways. Acts as a mediator of BMP4-mediated modulation of canonical Wnt signaling activity in neural stem cells. Required for DNA damage-induced ATM phosphorylation, p53 activation and cell cycle arrest. Involved in myelopoiesis. Transcription factor. Binds to the oxygen responsive element of COX4I2 and represses its transcription under hypoxia conditions (4% oxygen), as well as normoxia conditions (20% oxygen). May repress COX4I2 transactivation induced by CHCHD2 and RBPJ. Binds preferentially to DNA containing cytidine-phosphate-guanosine (CpG) dinucleotides over CpH (H=A, T, and C), hemimethylated-CpG and hemimethylated-hydroxymethyl-CpG. The chain is CXXC-type zinc finger protein 5 (CXXC5) from Homo sapiens (Human).